Reading from the N-terminus, the 31-residue chain is Cyclotide vico-A (31 aa).

The segment at residues 1-31 (GSIPCAESCVYIPCFTGIAGCSCKNKVCYYN) is a cross-link (cyclopeptide (Gly-Asn)). Disulfide bonds link Cys5–Cys21, Cys9–Cys23, and Cys14–Cys28.

The protein belongs to the cyclotide family. Bracelet subfamily. Post-translationally, this is a cyclic peptide.

Its function is as follows. Probably participates in a plant defense mechanism. This Viola cotyledon (Violeta) protein is Cyclotide vico-A.